We begin with the raw amino-acid sequence, 356 residues long: S-adenosylmethionine:tRNA ribosyltransferase-isomerase (356 aa).

The protein belongs to the QueA family. In terms of assembly, monomer.

It localises to the cytoplasm. The catalysed reaction is 7-aminomethyl-7-carbaguanosine(34) in tRNA + S-adenosyl-L-methionine = epoxyqueuosine(34) in tRNA + adenine + L-methionine + 2 H(+). It functions in the pathway tRNA modification; tRNA-queuosine biosynthesis. In terms of biological role, transfers and isomerizes the ribose moiety from AdoMet to the 7-aminomethyl group of 7-deazaguanine (preQ1-tRNA) to give epoxyqueuosine (oQ-tRNA). The chain is S-adenosylmethionine:tRNA ribosyltransferase-isomerase from Yersinia pestis.